A 284-amino-acid chain; its full sequence is Tropomyosin Per a 7.0101 (284 aa).

Residues 22–266 (ALLCEQQARD…EDELVHEKEK (245 aa)) are a coiled coil.

It belongs to the tropomyosin family. In terms of assembly, homodimer.

Tropomyosin, in association with the troponin complex, plays a central role in the calcium dependent regulation of muscle contraction. The sequence is that of Tropomyosin Per a 7.0101 from Periplaneta americana (American cockroach).